The primary structure comprises 241 residues: Dephospho-CoA kinase CAB5 (241 aa).

The DPCK domain occupies 3 to 211 (VVGLTGGIAC…PSKLRTVLEY (209 aa)). ATP is bound at residue 8–15 (GGIACGKS).

The protein belongs to the CoaE family.

The protein resides in the endoplasmic reticulum. The protein localises to the mitochondrion. Its subcellular location is the nucleus. The enzyme catalyses 3'-dephospho-CoA + ATP = ADP + CoA + H(+). It functions in the pathway cofactor biosynthesis; coenzyme A biosynthesis; CoA from (R)-pantothenate: step 5/5. Its function is as follows. Catalyzes the phosphorylation of the 3'-hydroxyl group of dephosphocoenzyme A to form coenzyme A. This Saccharomyces cerevisiae (strain ATCC 204508 / S288c) (Baker's yeast) protein is Dephospho-CoA kinase CAB5 (CAB5).